Here is a 284-residue protein sequence, read N- to C-terminus: Pantothenate synthetase (284 aa).

Position 30–37 (30–37 (MGYLHEGH)) interacts with ATP. The active-site Proton donor is histidine 37. Glutamine 61 is a binding site for (R)-pantoate. Residue glutamine 61 coordinates beta-alanine. 147 to 150 (GQKD) is a binding site for ATP. Glutamine 153 provides a ligand contact to (R)-pantoate. ATP is bound by residues valine 176 and 184–187 (KSSR).

The protein belongs to the pantothenate synthetase family. As to quaternary structure, homodimer.

It localises to the cytoplasm. It carries out the reaction (R)-pantoate + beta-alanine + ATP = (R)-pantothenate + AMP + diphosphate + H(+). It participates in cofactor biosynthesis; (R)-pantothenate biosynthesis; (R)-pantothenate from (R)-pantoate and beta-alanine: step 1/1. Functionally, catalyzes the condensation of pantoate with beta-alanine in an ATP-dependent reaction via a pantoyl-adenylate intermediate. In Lysinibacillus sphaericus (strain C3-41), this protein is Pantothenate synthetase.